The following is a 384-amino-acid chain: 5-amino-6-(D-ribitylamino)uracil--L-tyrosine 4-hydroxyphenyl transferase 2 (384 aa).

The region spanning 53–286 (VSYVVNRNIY…IAISRVILHT (234 aa)) is the Radical SAM core domain. Residues C67, C71, and C74 each contribute to the [4Fe-4S] cluster site.

It belongs to the radical SAM superfamily. CofH family. Consists of two subunits, CofG and CofH. It depends on [4Fe-4S] cluster as a cofactor.

The enzyme catalyses 5-amino-6-(D-ribitylamino)uracil + L-tyrosine + S-adenosyl-L-methionine = 5-amino-5-(4-hydroxybenzyl)-6-(D-ribitylimino)-5,6-dihydrouracil + 2-iminoacetate + 5'-deoxyadenosine + L-methionine + H(+). The protein operates within cofactor biosynthesis; coenzyme F0 biosynthesis. Catalyzes the radical-mediated synthesis of 5-amino-5-(4-hydroxybenzyl)-6-(D-ribitylimino)-5,6-dihydrouracil from 5-amino-6-(D-ribitylamino)uracil and L-tyrosine. The polypeptide is 5-amino-6-(D-ribitylamino)uracil--L-tyrosine 4-hydroxyphenyl transferase 2 (Methanosarcina mazei (strain ATCC BAA-159 / DSM 3647 / Goe1 / Go1 / JCM 11833 / OCM 88) (Methanosarcina frisia)).